A 201-amino-acid chain; its full sequence is Imidazoleglycerol-phosphate dehydratase (201 aa).

This sequence belongs to the imidazoleglycerol-phosphate dehydratase family.

The protein localises to the cytoplasm. The enzyme catalyses D-erythro-1-(imidazol-4-yl)glycerol 3-phosphate = 3-(imidazol-4-yl)-2-oxopropyl phosphate + H2O. It participates in amino-acid biosynthesis; L-histidine biosynthesis; L-histidine from 5-phospho-alpha-D-ribose 1-diphosphate: step 6/9. This is Imidazoleglycerol-phosphate dehydratase from Synechococcus sp. (strain CC9311).